The chain runs to 463 residues: Gamma-aminobutyric acid receptor subunit alpha-5 (463 aa).

An N-terminal signal peptide occupies residues 1 to 25; it reads MDNGMLSRFIMTQTLLVFCISMTLS. Residues 26–260 lie on the Extracellular side of the membrane; sequence SHFGFSQMPT…FHLKRKIGYF (235 aa). N45 carries an N-linked (GlcNAc...) asparagine glycan. R101 lines the 4-aminobutanoate pocket. N145 is a glycosylation site (N-linked (GlcNAc...) asparagine). 4-aminobutanoate is bound at residue T164. A disulfide bridge links C173 with C187. N207 and N236 each carry an N-linked (GlcNAc...) asparagine glycan. Transmembrane regions (helical) follow at residues 261–281, 287–308, and 319–340; these read VIQT…SFWL, PART…ISAR, and AMDW…EFAT. Topologically, residues 341-428 are cytoplasmic; it reads VNYFTKRGWA…TYNSISKIDK (88 aa). A Glycyl lysine isopeptide (Lys-Gly) (interchain with G-Cter in ubiquitin) cross-link involves residue K355. Residues 387–408 are disordered; it reads PNIPKEQPPAGTANAPTVSIKA. The helical transmembrane segment at 429-449 threads the bilayer; the sequence is MSRIVFPILFGTFNLVYWATY.

Belongs to the ligand-gated ion channel (TC 1.A.9) family. Gamma-aminobutyric acid receptor (TC 1.A.9.5) subfamily. GABRA5 sub-subfamily. In terms of assembly, heteropentamer, formed by a combination of alpha (GABRA1-6), beta (GABRB1-3), gamma (GABRG1-3), delta (GABRD), epsilon (GABRE), rho (GABRR1-3), pi (GABRP) and theta (GABRQ) chains, each subunit exhibiting distinct physiological and pharmacological properties. As to expression, expressed in brain, in hippocampal pyramidal neurons.

Its subcellular location is the postsynaptic cell membrane. The protein resides in the cell membrane. It catalyses the reaction chloride(in) = chloride(out). Its function is as follows. Alpha subunit of the heteropentameric ligand-gated chloride channel gated by gamma-aminobutyric acid (GABA), a major inhibitory neurotransmitter in the brain. GABA-gated chloride channels, also named GABA(A) receptors (GABAAR), consist of five subunits arranged around a central pore and contain GABA active binding site(s) located at the alpha and beta subunit interface(s). When activated by GABA, GABAARs selectively allow the flow of chloride anions across the cell membrane down their electrochemical gradient. GABAARs containing alpha-5/GABRA5 are mainly extrasynaptic and contribute to the tonic GABAergic inhibition of the hippocampus. Extrasynaptic alpha-5-containing GABAARs in CA1 pyramidal neurons play a role in learning and memory processes. The chain is Gamma-aminobutyric acid receptor subunit alpha-5 from Mus musculus (Mouse).